We begin with the raw amino-acid sequence, 349 residues long: Terpene synthase 2 (349 aa).

The short motif at 84 to 89 (DDLFDG) is the DDxx(x)D/E motif element. The short motif at 229–237 (NDCVSYEKE) is the NDxxSxxxD/E motif element.

Belongs to the terpene synthase family.

The enzyme catalyses (2E,6E)-farnesyl diphosphate = (3S)-(+)-asterisca-2(9),6-diene + diphosphate. It carries out the reaction (2E)-geranyl diphosphate = (Z)-beta-ocimene + diphosphate. The catalysed reaction is (2E)-geranyl diphosphate + H2O = linalool + diphosphate. Terpene synthase that converts its substrate farnesyl diphosphate (FPP) into the sesquiterpene (3S)-(+)-asterisca-2(9),6-diene. Is also able to convert geranyl diphosphate (GPP) into a mixture of monoterpenes including (Z)-beta-ocimene, allo-ocimene and linalool. The protein is Terpene synthase 2 of Dictyostelium discoideum (Social amoeba).